Reading from the N-terminus, the 353-residue chain is tRNA U34 carboxymethyltransferase (353 aa).

Residues lysine 101, tryptophan 119, lysine 124, glycine 144, 166 to 168 (DPS), 207 to 208 (LE), methionine 227, tyrosine 231, and arginine 346 each bind carboxy-S-adenosyl-L-methionine.

It belongs to the class I-like SAM-binding methyltransferase superfamily. CmoB family. Homotetramer.

It catalyses the reaction carboxy-S-adenosyl-L-methionine + 5-hydroxyuridine(34) in tRNA = 5-carboxymethoxyuridine(34) in tRNA + S-adenosyl-L-homocysteine + H(+). In terms of biological role, catalyzes carboxymethyl transfer from carboxy-S-adenosyl-L-methionine (Cx-SAM) to 5-hydroxyuridine (ho5U) to form 5-carboxymethoxyuridine (cmo5U) at position 34 in tRNAs. The sequence is that of tRNA U34 carboxymethyltransferase from Psychrobacter sp. (strain PRwf-1).